We begin with the raw amino-acid sequence, 460 residues long: Elongation factor 1-alpha (460 aa).

Gly-2 carries the n,N,N-trimethylglycine modification. Lys-3 bears the N6,N6-dimethyllysine; alternate mark. Lys-3 carries the N6-methyllysine; alternate modification. The region spanning 6–241 (KTHINLVVIG…DAIDPPTRPT (236 aa)) is the tr-type G domain. The tract at residues 15–22 (GHVDSGKS) is G1. A GTP-binding site is contributed by 15–22 (GHVDSGKS). Residue Lys-31 is modified to N6-methyllysine. Positions 71 to 75 (GITID) are G2. Lys-80 carries the post-translational modification N6,N6,N6-trimethyllysine. A G3 region spans residues 92–95 (DAPG). Residues 92-96 (DAPGH) and 154-157 (NKMD) each bind GTP. A G4 region spans residues 154–157 (NKMD). The tract at residues 193–195 (SGF) is G5. Lys-317 carries the post-translational modification N6,N6-dimethyllysine; alternate. The residue at position 317 (Lys-317) is an N6-methyllysine; alternate. Lys-391 carries the post-translational modification N6-methyllysine.

This sequence belongs to the TRAFAC class translation factor GTPase superfamily. Classic translation factor GTPase family. EF-Tu/EF-1A subfamily.

It localises to the cytoplasm. Functionally, this protein promotes the GTP-dependent binding of aminoacyl-tRNA to the A-site of ribosomes during protein biosynthesis. The sequence is that of Elongation factor 1-alpha (TEF) from Coccidioides immitis (strain RS) (Valley fever fungus).